Consider the following 448-residue polypeptide: Deoxyguanosinetriphosphate triphosphohydrolase-like protein (448 aa).

The disordered stretch occupies residues 1–26 (MQINSSWQERFLADPPREKDHRPPFR). Residues 11–26 (FLADPPREKDHRPPFR) show a composition bias toward basic and acidic residues. The region spanning 59–272 (RLTHSLEVAQ…MELADDIAYA (214 aa)) is the HD domain.

This sequence belongs to the dGTPase family. Type 2 subfamily.

The protein is Deoxyguanosinetriphosphate triphosphohydrolase-like protein of Histophilus somni (strain 129Pt) (Haemophilus somnus).